The primary structure comprises 1447 residues: Calcium-dependent secretion activator (1447 aa).

The span at 1–15 (MIDPSSSEEEGEDDA) shows a compositional bias: acidic residues. Disordered regions lie at residues 1–35 (MIDP…TSAV) and 101–163 (DTGN…EEEE). Polar residues-rich tracts occupy residues 18-32 (NVSS…TKGT) and 111-126 (GIPS…QSVG). Residues 127-144 (SSRANSLPRPLSPSPSLT) show a composition bias toward low complexity. Residues 145–163 (SEKHETAEPHGKHEREEEE) show a composition bias toward basic and acidic residues. The C2 domain maps to 417–547 (SKYGLQKLKR…PLSSKSPEWH (131 aa)). Residues 573–683 (NMKHCGYLYA…WVMAMYRATG (111 aa)) enclose the PH domain. The 188-residue stretch at 970–1157 (VDMDRVLSEQ…DMIEQCIQRT (188 aa)) folds into the MHD1 domain. Acidic residues predominate over residues 1386 to 1395 (REGEEEDNGD). Residues 1386–1406 (REGEEEDNGDESTSNIPRGLP) are disordered.

As to expression, restricted to the nervous system at all stages of development and highly localized at synapses (at protein level).

It localises to the cytoplasmic vesicle membrane. It is found in the synapse. Its function is as follows. Calcium-binding protein involved in exocytosis of vesicles filled with neurotransmitters and neuropeptides. May specifically mediate the Ca(2+)-dependent exocytosis of large dense-core vesicles (DCVs) and other dense-core vesicles. However, it probably also participates in small clear synaptic vesicles (SVs) exocytosis and it is unclear whether its function is related to Ca(2+) triggering. The sequence is that of Calcium-dependent secretion activator from Drosophila melanogaster (Fruit fly).